Reading from the N-terminus, the 208-residue chain is Holliday junction resolvase RecU (208 aa).

Residues 1-28 (MNYPNGKPYSKNKPLDGRKSSPFSSNIE) form a disordered region. 4 residues coordinate Mg(2+): Thr-87, Asp-89, Glu-102, and Gln-121.

It belongs to the RecU family. Mg(2+) is required as a cofactor.

It localises to the cytoplasm. The catalysed reaction is Endonucleolytic cleavage at a junction such as a reciprocal single-stranded crossover between two homologous DNA duplexes (Holliday junction).. Functionally, endonuclease that resolves Holliday junction intermediates in genetic recombination. Cleaves mobile four-strand junctions by introducing symmetrical nicks in paired strands. Promotes annealing of linear ssDNA with homologous dsDNA. Required for DNA repair, homologous recombination and chromosome segregation. The sequence is that of Holliday junction resolvase RecU from Staphylococcus epidermidis (strain ATCC 12228 / FDA PCI 1200).